A 268-amino-acid chain; its full sequence is Chymotrypsin-C (268 aa).

The N-terminal stretch at Met1–Cys16 is a signal peptide. Residues Cys17 to Arg29 constitute a propeptide, activation peptide. 5 cysteine pairs are disulfide-bonded: Cys17–Cys141, Cys59–Cys75, Cys155–Cys222, Cys186–Cys202, and Cys212–Cys243. Asn25 carries N-linked (GlcNAc...) asparagine glycosylation. Residues Val30–Gln267 enclose the Peptidase S1 domain. Residue His74 is the Charge relay system of the active site. The N-linked (GlcNAc...) asparagine glycan is linked to Asn90. Catalysis depends on Asp121, which acts as the Charge relay system. Ser216 (charge relay system) is an active-site residue.

The protein belongs to the peptidase S1 family. Elastase subfamily. As to expression, pancreas.

The catalysed reaction is Preferential cleavage: Leu-|-Xaa, Tyr-|-Xaa, Phe-|-Xaa, Met-|-Xaa, Trp-|-Xaa, Gln-|-Xaa, Asn-|-Xaa.. Its function is as follows. Regulates activation and degradation of trypsinogens and procarboxypeptidases by targeting specific cleavage sites within their zymogen precursors. Has chymotrypsin-type protease activity and hypocalcemic activity. Cleaves TRY4 and TRY5 and thereby inhibits their autoactivation. This Rattus norvegicus (Rat) protein is Chymotrypsin-C (Ctrc).